Consider the following 513-residue polypeptide: Probable DNA ligase (513 aa).

Glutamate 215 serves as a coordination point for ATP. Catalysis depends on lysine 217, which acts as the N6-AMP-lysine intermediate. Residues arginine 222, arginine 237, glutamate 266, phenylalanine 306, arginine 378, and lysine 384 each contribute to the ATP site.

This sequence belongs to the ATP-dependent DNA ligase family. The cofactor is Mg(2+).

The enzyme catalyses ATP + (deoxyribonucleotide)n-3'-hydroxyl + 5'-phospho-(deoxyribonucleotide)m = (deoxyribonucleotide)n+m + AMP + diphosphate.. Its function is as follows. DNA ligase that seals nicks in double-stranded DNA during DNA replication, DNA recombination and DNA repair. The sequence is that of Probable DNA ligase from Mycobacterium marinum (strain ATCC BAA-535 / M).